Reading from the N-terminus, the 887-residue chain is DNA mismatch repair protein MutS (887 aa).

Gly-626–Ser-633 serves as a coordination point for ATP.

This sequence belongs to the DNA mismatch repair MutS family.

Functionally, this protein is involved in the repair of mismatches in DNA. It is possible that it carries out the mismatch recognition step. This protein has a weak ATPase activity. This chain is DNA mismatch repair protein MutS, found in Methanococcoides burtonii (strain DSM 6242 / NBRC 107633 / OCM 468 / ACE-M).